The primary structure comprises 256 residues: Thiazole synthase (256 aa).

The active-site Schiff-base intermediate with DXP is Lys96. Residues Gly157, 184-185 (AG), and 206-207 (NT) each bind 1-deoxy-D-xylulose 5-phosphate.

The protein belongs to the ThiG family. As to quaternary structure, homotetramer. Forms heterodimers with either ThiH or ThiS.

The protein localises to the cytoplasm. The enzyme catalyses [ThiS sulfur-carrier protein]-C-terminal-Gly-aminoethanethioate + 2-iminoacetate + 1-deoxy-D-xylulose 5-phosphate = [ThiS sulfur-carrier protein]-C-terminal Gly-Gly + 2-[(2R,5Z)-2-carboxy-4-methylthiazol-5(2H)-ylidene]ethyl phosphate + 2 H2O + H(+). It functions in the pathway cofactor biosynthesis; thiamine diphosphate biosynthesis. Its function is as follows. Catalyzes the rearrangement of 1-deoxy-D-xylulose 5-phosphate (DXP) to produce the thiazole phosphate moiety of thiamine. Sulfur is provided by the thiocarboxylate moiety of the carrier protein ThiS. In vitro, sulfur can be provided by H(2)S. The chain is Thiazole synthase from Brucella anthropi (strain ATCC 49188 / DSM 6882 / CCUG 24695 / JCM 21032 / LMG 3331 / NBRC 15819 / NCTC 12168 / Alc 37) (Ochrobactrum anthropi).